The sequence spans 548 residues: 5-epi-aristolochene synthase 2 (548 aa).

Positions 301, 305, 444, 448, and 452 each coordinate Mg(2+). The DDXXD motif motif lies at 301-305 (DDTFD).

The protein belongs to the terpene synthase family. Monomer. Mg(2+) serves as cofactor. As to expression, expressed in roots, but not in shoots.

It localises to the cytoplasm. It catalyses the reaction (2E,6E)-farnesyl diphosphate = (+)-5-epi-aristolochene + diphosphate. The protein operates within secondary metabolite biosynthesis; terpenoid biosynthesis. Functionally, catalyzes the cyclization of trans,trans-farnesyl diphosphate (FPP) to the bicyclic intermediate 5-epi-aristolochene, initial step in the conversion of FPP to the sesquiterpenoid antifungal phytoalexin capsidiol. Produces germacrene A as an enzyme-bound intermediate that is not released by the enzyme, but is further cyclized to produce the bicyclic 5-epi-aristolochene. The chain is 5-epi-aristolochene synthase 2 from Nicotiana attenuata (Coyote tobacco).